The chain runs to 253 residues: tRNA-cytidine(32) 2-sulfurtransferase 2 (253 aa).

Residues 33–38 carry the PP-loop motif motif; that stretch reads SGGKDS. Positions 108, 111, and 199 each coordinate [4Fe-4S] cluster.

Belongs to the TtcA family. As to quaternary structure, homodimer. Mg(2+) serves as cofactor. It depends on [4Fe-4S] cluster as a cofactor.

The protein resides in the cytoplasm. It carries out the reaction cytidine(32) in tRNA + S-sulfanyl-L-cysteinyl-[cysteine desulfurase] + AH2 + ATP = 2-thiocytidine(32) in tRNA + L-cysteinyl-[cysteine desulfurase] + A + AMP + diphosphate + H(+). The protein operates within tRNA modification. Catalyzes the ATP-dependent 2-thiolation of cytidine in position 32 of tRNA, to form 2-thiocytidine (s(2)C32). The sulfur atoms are provided by the cysteine/cysteine desulfurase (IscS) system. In Francisella tularensis subsp. novicida (strain U112), this protein is tRNA-cytidine(32) 2-sulfurtransferase 2.